A 558-amino-acid polypeptide reads, in one-letter code: Undecaprenyl phosphate-alpha-4-amino-4-deoxy-L-arabinose arabinosyl transferase 1 (558 aa).

Transmembrane regions (helical) follow at residues 4 to 24 (GAGL…LVPL), 87 to 107 (FASV…SWTV), 115 to 135 (LLAA…TYSV), 136 to 156 (LDPM…FALR), 178 to 198 (FMTK…PVAL), 207 to 227 (LGYG…WALA), 257 to 277 (APFW…LGLL), 295 to 315 (FLLL…KGKL), 316 to 336 (LTYI…YGRE), 355 to 375 (AFAL…LPWA), 383 to 403 (WPRI…AAVS), and 411 to 431 (WALA…IIPQ).

It belongs to the glycosyltransferase 83 family.

Its subcellular location is the cell inner membrane. It carries out the reaction 4-amino-4-deoxy-alpha-L-arabinopyranosyl di-trans,octa-cis-undecaprenyl phosphate + lipid IVA = lipid IIA + di-trans,octa-cis-undecaprenyl phosphate.. Its pathway is lipopolysaccharide metabolism; 4-amino-4-deoxy-beta-L-arabinose-lipid A biosynthesis. Catalyzes the transfer of the L-Ara4N moiety of the glycolipid undecaprenyl phosphate-alpha-L-Ara4N to lipid A. The modified arabinose is attached to lipid A and is required for resistance to polymyxin and cationic antimicrobial peptides. This chain is Undecaprenyl phosphate-alpha-4-amino-4-deoxy-L-arabinose arabinosyl transferase 1, found in Sodalis glossinidius (strain morsitans).